The sequence spans 432 residues: E3 ubiquitin-protein ligase RNF135 (432 aa).

An RING-type zinc finger spans residues 21 to 63; the sequence is CIICQGLLDWPATLPCGHSFCRHCLEALWGARDARRWACPTCR. The segment at 95–121 is disordered; sequence GSDPAHCPCPGSSSLSSAAARPRRRPE. A compositionally biased stretch (low complexity) spans 102 to 114; the sequence is PCPGSSSLSSAAA. Coiled-coil stretches lie at residues 121-156 and 191-216; these read ELQR…QNQR and DTAA…ESVT. The 192-residue stretch at 241-432 folds into the B30.2/SPRY domain; the sequence is PDQSHPALRR…NYLIIKQVKV (192 aa).

Homodimer. Interacts (homodimer) with RIGI (double-stranded RNA-bound oligomeric form); involved in both RIGI ubiquitination, oligomerization into filaments associated with viral RNAs and the bridging of these filaments. Interacts with UBE2D3 and UBE2N; E2 ubiquitin ligases involved in RNF135-mediated ubiquitination of RIGI and activation of the RIG-I signaling pathway. Interacts with PCBP2. In terms of processing, (Microbial infection) Cleaved and inactivated by hepatitis C virus NS3/NS4A. Expressed in skeletal muscle, spleen, kidney, placenta, prostate, stomach, thyroid and tongue. Also weakly expressed in heart, thymus, liver and lung.

Its subcellular location is the cytoplasm. It is found in the stress granule. It catalyses the reaction S-ubiquitinyl-[E2 ubiquitin-conjugating enzyme]-L-cysteine + [acceptor protein]-L-lysine = [E2 ubiquitin-conjugating enzyme]-L-cysteine + N(6)-ubiquitinyl-[acceptor protein]-L-lysine.. Its pathway is protein modification; protein ubiquitination. In terms of biological role, E2-dependent E3 ubiquitin-protein ligase that functions as a RIGI coreceptor in the sensing of viral RNAs in cell cytoplasm and the activation of the antiviral innate immune response. Together with the UBE2D3, UBE2N and UB2V1 E2 ligases, catalyzes the 'Lys-63'-linked polyubiquitination of RIGI oligomerized on viral RNAs, an essential step in the activation of the RIG-I signaling pathway. Through a ubiquitin-independent parallel mechanism, which consists in bridging RIGI filaments forming on longer viral RNAs, further activates the RIG-I signaling pathway. This second mechanism that synergizes with the ubiquitin-dependent one would thereby allow an RNA length-dependent regulation of the RIG-I signaling pathway. Associated with the E2 ligase UBE2N, also constitutively synthesizes unanchored 'Lys-63'-linked polyubiquitin chains that may also activate the RIG-I signaling pathway. The chain is E3 ubiquitin-protein ligase RNF135 from Homo sapiens (Human).